The primary structure comprises 197 residues: ATP-dependent Clp protease proteolytic subunit 2 (197 aa).

Serine 96 functions as the Nucleophile in the catalytic mechanism. Residue histidine 121 is part of the active site.

Belongs to the peptidase S14 family. As to quaternary structure, fourteen ClpP subunits assemble into 2 heptameric rings which stack back to back to give a disk-like structure with a central cavity, resembling the structure of eukaryotic proteasomes.

The protein localises to the cytoplasm. The enzyme catalyses Hydrolysis of proteins to small peptides in the presence of ATP and magnesium. alpha-casein is the usual test substrate. In the absence of ATP, only oligopeptides shorter than five residues are hydrolyzed (such as succinyl-Leu-Tyr-|-NHMec, and Leu-Tyr-Leu-|-Tyr-Trp, in which cleavage of the -Tyr-|-Leu- and -Tyr-|-Trp bonds also occurs).. Its function is as follows. Cleaves peptides in various proteins in a process that requires ATP hydrolysis. Has a chymotrypsin-like activity. Plays a major role in the degradation of misfolded proteins. This is ATP-dependent Clp protease proteolytic subunit 2 from Synechococcus sp. (strain CC9605).